The primary structure comprises 359 residues: Aminomethyltransferase (359 aa).

The protein belongs to the GcvT family. The glycine cleavage system is composed of four proteins: P, T, L and H.

The catalysed reaction is N(6)-[(R)-S(8)-aminomethyldihydrolipoyl]-L-lysyl-[protein] + (6S)-5,6,7,8-tetrahydrofolate = N(6)-[(R)-dihydrolipoyl]-L-lysyl-[protein] + (6R)-5,10-methylene-5,6,7,8-tetrahydrofolate + NH4(+). Its function is as follows. The glycine cleavage system catalyzes the degradation of glycine. The chain is Aminomethyltransferase from Synechococcus sp. (strain RCC307).